A 305-amino-acid polypeptide reads, in one-letter code: MTNEDTFSTIDHAINLETGKTIRVWETFPKDNSLVKNNTILIASGFARRMDHFAGLAEYLSSNGFHVIRYDSLHHVGLSSGNINEFSMTIGKKSLLTVIEWLKRRNINKFGLIAASLSARIAYDVANEIDLSFLVTAVGVVNLRDTLERALKYDYLQLPIEELPEDLDFEGHNLGSEIFVTDCFKHQWDTFNSTKNKMKDLNIPFIAFTANDDSWVKQNEVLELIESLNPEKCQLYSLIGSSHDLGENLVVLRNFYQSVTKAAIALDKGSLNLDINIIEPKFEDITSVTVKERRLKHNIESLELA.

Catalysis depends on charge relay system residues Ser116, Asp213, and His243.

It belongs to the LuxD family.

The protein operates within lipid metabolism; fatty acid reduction for biolumincescence. In terms of biological role, acyl transferase is part of the fatty acid reductase system required for aldehyde biosynthesis; it produces fatty acids for the luminescent reaction. This chain is Acyl transferase, found in Shewanella woodyi (strain ATCC 51908 / MS32).